The chain runs to 284 residues: Nucleotide-binding protein Shewmr7_3352 (284 aa).

8-15 provides a ligand contact to ATP; it reads GRSGSGKS. 56 to 59 serves as a coordination point for GTP; the sequence is DVRN.

The protein belongs to the RapZ-like family.

Functionally, displays ATPase and GTPase activities. This chain is Nucleotide-binding protein Shewmr7_3352, found in Shewanella sp. (strain MR-7).